Reading from the N-terminus, the 496-residue chain is Cytochrome P450 71D181 (496 aa).

The helical; Signal-anchor for type II membrane protein transmembrane segment at 1–21 (MDISILWVAIILVISSYFIFM) threads the bilayer. Position 435 (C435) interacts with heme. Residues 471–496 (MSETPGLSGPRKNPLIMVPTIHNPTS) form a disordered region.

Belongs to the cytochrome P450 family. The cofactor is heme.

It is found in the membrane. It carries out the reaction gamma-terpinene + 2 reduced [NADPH--hemoprotein reductase] + 2 O2 = carvacrol + 2 oxidized [NADPH--hemoprotein reductase] + 3 H2O + 2 H(+). The enzyme catalyses (4S)-limonene + reduced [NADPH--hemoprotein reductase] + O2 = (1S,5R)-carveol + oxidized [NADPH--hemoprotein reductase] + H2O + H(+). The catalysed reaction is (4R)-limonene + reduced [NADPH--hemoprotein reductase] + O2 = (1R,5S)-carveol + oxidized [NADPH--hemoprotein reductase] + H2O + H(+). It catalyses the reaction alpha-terpinene + 2 reduced [NADPH--hemoprotein reductase] + 2 O2 = carvacrol + 2 oxidized [NADPH--hemoprotein reductase] + 3 H2O + 2 H(+). It participates in secondary metabolite biosynthesis; terpenoid biosynthesis. In terms of biological role, involved in the biosynthesis of phenolic monoterpenes natural products thymol and carvacrol which have a broad range of biological activities acting as antimicrobial compounds, insecticides, antioxidants and pharmaceutical agents. Catalyzes the C2-hydroxylation of gamma-terpinene and alpha-terpinene to produce carvacrol. Also mediates the C6-hydroxylation of (4S)-limonene and (4R)-limonene to form carveol. The chain is Cytochrome P450 71D181 from Thymus vulgaris (Thyme).